The sequence spans 241 residues: MAGHSKWANIKHKKAAADAKRGKIWTRLIKEITVAARLGGGDVDSNPRLRLAIDKGTDANMPKDNIQRAIQRGVGGLEGAHYEEIRYEGYGISGAAIIVDCMTDNRTRTVAEVRHAFDKHGGNMGTQGSVAFMFDHVGQFIFAPGTPEDKLMDAALEAGAEDVVTNDDGSIEVLCPPNDFAKVKAALEGAGFKAELAEVIMKPQTEVEFTGDDAAKMQKLLDALENLDDVQEVYTNAVIGE.

Belongs to the TACO1 family.

It is found in the cytoplasm. The polypeptide is Probable transcriptional regulatory protein RSc2190 (Ralstonia nicotianae (strain ATCC BAA-1114 / GMI1000) (Ralstonia solanacearum)).